The following is a 216-amino-acid chain: Large ribosomal subunit protein uL1 (216 aa).

This sequence belongs to the universal ribosomal protein uL1 family. As to quaternary structure, component of the large ribosomal subunit.

Its subcellular location is the cytoplasm. Component of the large ribosomal subunit. The ribosome is a large ribonucleoprotein complex responsible for the synthesis of proteins in the cell. The protein is Large ribosomal subunit protein uL1 (rpl10a) of Danio rerio (Zebrafish).